The sequence spans 85 residues: Beta-insect depressant toxin Lqh-dprIT3b (85 aa).

Positions 1-21 are cleaved as a signal peptide; sequence MKLLLLLTISASMLIEGLVNA. The LCN-type CS-alpha/beta domain maps to 22-82; sequence DGYIRGGDGC…EWDYETNTCG (61 aa). 4 disulfide bridges follow: Cys-31-Cys-81, Cys-35-Cys-56, Cys-42-Cys-63, and Cys-46-Cys-65. A Glycine amide modification is found at Gly-82.

The protein belongs to the long (4 C-C) scorpion toxin superfamily. Sodium channel inhibitor family. Beta subfamily. As to expression, expressed by the venom gland.

The protein resides in the secreted. In terms of biological role, depressant insect beta-toxins cause a transient contraction paralysis followed by a slow flaccid paralysis. They bind voltage-independently at site-4 of sodium channels (Nav) and block action potentials, primarily by depolarizing the axonal membrane and suppressing the sodium current. This depressant toxin is active only on insects. It is found in a relatively small amount in the venom, and its activity on insects is 10-fold higher compared to other known depressant toxins. This Leiurus hebraeus (Hebrew deathstalker scorpion) protein is Beta-insect depressant toxin Lqh-dprIT3b.